Here is a 581-residue protein sequence, read N- to C-terminus: Chaperonin GroEL 1 (581 aa).

ATP contacts are provided by residues 29–32 (TIGP), 86–90 (DGTTT), Gly-413, and Asp-492. The segment at 522 to 541 (PEPEAAGPGGPGADPMGGMG) is disordered. Gly residues predominate over residues 528 to 541 (GPGGPGADPMGGMG).

It belongs to the chaperonin (HSP60) family. As to quaternary structure, forms a cylinder of 14 subunits composed of two heptameric rings stacked back-to-back. Interacts with the co-chaperonin GroES.

It localises to the cytoplasm. The catalysed reaction is ATP + H2O + a folded polypeptide = ADP + phosphate + an unfolded polypeptide.. Its function is as follows. Together with its co-chaperonin GroES, plays an essential role in assisting protein folding. The GroEL-GroES system forms a nano-cage that allows encapsulation of the non-native substrate proteins and provides a physical environment optimized to promote and accelerate protein folding. The protein is Chaperonin GroEL 1 of Prochlorococcus marinus (strain MIT 9301).